The chain runs to 897 residues: High molecular weight rhoptry protein 3 (897 aa).

Positions 1-24 (MRSKHLVTLFIITFLSFSTVKVWG) are cleaved as a signal peptide. 5 disulfide bridges follow: cysteine 157–cysteine 231, cysteine 244–cysteine 253, cysteine 262–cysteine 276, cysteine 421–cysteine 620, and cysteine 475–cysteine 536. A helical membrane pass occupies residues 597–615 (FVLYFISIISVLYINEYYY). Disordered regions lie at residues 788–845 (KEQS…SNLK) and 859–897 (QLDKEKPKKKKSKRKKKRDSSSDRILLEESKTFTSENEL). Polar residues predominate over residues 792-801 (KSTSAASTSD). A compositionally biased stretch (low complexity) spans 802-817 (EISGSEGPSTESTSTG). The residue at position 804 (serine 804) is a Phosphoserine; by CDPK1. The segment covering 820-832 (GEDKTTDNTYKEM) has biased composition (basic and acidic residues). The span at 865–876 (PKKKKSKRKKKR) shows a compositional bias: basic residues. A compositionally biased stretch (basic and acidic residues) spans 877 to 889 (DSSSDRILLEESK).

Component of the RhopH complex. RhopH complex is composed of CLAG3.1/CLAG3.2, RhopH2 and RhopH3 with a 1:1:1 subunit stoichiometry. Interacts with CLAG3.1/CLAG3.2. Interacts with CDPK1; the interaction promotes RhopH3 phosphorylation in merozoites. In terms of processing, proteolytically cleaved near C-terminus.

It localises to the host cell membrane. The protein resides in the parasitophorous vacuole membrane. It is found in the cytoplasm. Its subcellular location is the cytoplasmic vesicle. The protein localises to the secretory vesicle. It localises to the rhoptry. Functionally, participates in the formation of new permeability pathways in Plasmodium-infected erythrocytes enabling the uptake of nutrients from the blood plasma. Required for maintaining invasion capacity of merozoites. Required for the trophozoite to schizont developmental transition of the intracellular parasite. This chain is High molecular weight rhoptry protein 3, found in Plasmodium falciparum (isolate 3D7).